We begin with the raw amino-acid sequence, 341 residues long: S-adenosylmethionine:tRNA ribosyltransferase-isomerase (341 aa).

This sequence belongs to the QueA family. In terms of assembly, monomer.

It is found in the cytoplasm. The catalysed reaction is 7-aminomethyl-7-carbaguanosine(34) in tRNA + S-adenosyl-L-methionine = epoxyqueuosine(34) in tRNA + adenine + L-methionine + 2 H(+). The protein operates within tRNA modification; tRNA-queuosine biosynthesis. Functionally, transfers and isomerizes the ribose moiety from AdoMet to the 7-aminomethyl group of 7-deazaguanine (preQ1-tRNA) to give epoxyqueuosine (oQ-tRNA). This Thermoanaerobacter sp. (strain X514) protein is S-adenosylmethionine:tRNA ribosyltransferase-isomerase.